We begin with the raw amino-acid sequence, 677 residues long: UvrABC system protein B (677 aa).

The region spanning 27–192 (ANLGQGVRDQ…QRNDFDFHRG (166 aa)) is the Helicase ATP-binding domain. 40 to 47 (GVTGSGKT) contacts ATP. The Beta-hairpin motif lies at 93–116 (YYDYYQPEAYVPASDTYIEKDSSI). In terms of domain architecture, Helicase C-terminal spans 432-594 (QVDDLLAECR…IEPRTIRKSL (163 aa)). Residues 638-673 (AKHIQKLEREMREAAKELEFERAATLRDRIRLLRER) form the UVR domain.

The protein belongs to the UvrB family. As to quaternary structure, forms a heterotetramer with UvrA during the search for lesions. Interacts with UvrC in an incision complex.

The protein resides in the cytoplasm. Functionally, the UvrABC repair system catalyzes the recognition and processing of DNA lesions. A damage recognition complex composed of 2 UvrA and 2 UvrB subunits scans DNA for abnormalities. Upon binding of the UvrA(2)B(2) complex to a putative damaged site, the DNA wraps around one UvrB monomer. DNA wrap is dependent on ATP binding by UvrB and probably causes local melting of the DNA helix, facilitating insertion of UvrB beta-hairpin between the DNA strands. Then UvrB probes one DNA strand for the presence of a lesion. If a lesion is found the UvrA subunits dissociate and the UvrB-DNA preincision complex is formed. This complex is subsequently bound by UvrC and the second UvrB is released. If no lesion is found, the DNA wraps around the other UvrB subunit that will check the other stand for damage. The polypeptide is UvrABC system protein B (Nitratidesulfovibrio vulgaris (strain DP4) (Desulfovibrio vulgaris)).